Consider the following 137-residue polypeptide: Phospholipase A2 group V (137 aa).

An N-terminal signal peptide occupies residues Met-1–Gly-20. 6 disulfides stabilise this stretch: Cys-46–Cys-137, Cys-48–Cys-64, Cys-63–Cys-117, Cys-70–Cys-110, Cys-79–Cys-103, and Cys-97–Cys-108. Ca(2+) is bound by residues Tyr-47, Gly-49, and Gly-51. The active site involves His-67. Asp-68 contacts Ca(2+). Residue Asp-111 is part of the active site.

It belongs to the phospholipase A2 family. Ca(2+) is required as a cofactor. In terms of processing, this enzyme lacks one of the seven disulfide bonds found in similar PA2 proteins. As to expression, expressed in peritoneal macrophages (at protein level). Expressed in heart, skeletal muscle and white adipose tissue.

It localises to the secreted. Its subcellular location is the cell membrane. It is found in the cytoplasmic vesicle. The protein localises to the phagosome. The protein resides in the recycling endosome. It localises to the golgi apparatus. Its subcellular location is the cis-Golgi network. It is found in the trans-Golgi network. It catalyses the reaction a 1,2-diacyl-sn-glycero-3-phosphocholine + H2O = a 1-acyl-sn-glycero-3-phosphocholine + a fatty acid + H(+). The enzyme catalyses 1-hexadecanoyl-2-(9Z-octadecenoyl)-sn-glycero-3-phosphocholine + H2O = 1-hexadecanoyl-sn-glycero-3-phosphocholine + (9Z)-octadecenoate + H(+). It carries out the reaction 1-hexadecanoyl-2-(5Z,8Z,11Z,14Z-eicosatetraenoyl)-sn-glycero-3-phosphocholine + H2O = 1-hexadecanoyl-sn-glycero-3-phosphocholine + (5Z,8Z,11Z,14Z)-eicosatetraenoate + H(+). The catalysed reaction is 1-hexadecanoyl-2-(9Z,12Z-octadecadienoyl)-sn-glycero-3-phosphoethanolamine + H2O = 1-hexadecanoyl-sn-glycero-3-phosphoethanolamine + (9Z,12Z)-octadecadienoate + H(+). It catalyses the reaction 1-hexadecanoyl-2-(5Z,8Z,11Z,14Z-eicosatetraenoyl)-sn-glycero-3-phosphoethanolamine + H2O = 1-hexadecanoyl-sn-glycero-3-phosphoethanolamine + (5Z,8Z,11Z,14Z)-eicosatetraenoate + H(+). The enzyme catalyses 1-octadecanoyl-2-(5Z,8Z,11Z,14Z-eicosatetraenoyl)-sn-glycero-3-phospho-(1D-myo-inositol) + H2O = 1-octadecanoyl-sn-glycero-3-phospho-(1D-myo-inositol) + (5Z,8Z,11Z,14Z)-eicosatetraenoate + H(+). It carries out the reaction 1-hexadecanoyl-2-(9Z-octadecenoyl)-sn-glycero-3-phosphoglycerol + H2O = 1-hexadecanoyl-sn-glycero-3-phosphoglycerol + (9Z)-octadecenoate + H(+). The catalysed reaction is N-hexadecanoyl-1,2-di-(9Z-octadecenoyl)-sn-glycero-3-phosphoethanolamine + H2O = N-hexadecanoyl-1-(9Z-octadecenoyl)-sn-glycero-3-phosphoethanolamine + (9Z)-octadecenoate + H(+). It catalyses the reaction 1'-[1,2-di-(9Z-octadecenoyl)-sn-glycero-3-phospho]-3'-[1-(9Z-octadecenoyl)-sn-glycero-3-phospho]-glycerol + H2O = 1',3'-bis-[1-(9Z-octadecenoyl)-sn-glycero-3-phospho]-glycerol + (9Z)-octadecenoate + H(+). The enzyme catalyses 1',3'-bis[1,2-di-(9Z-octadecenoyl)-sn-glycero-3-phospho]-glycerol + H2O = 1'-[1,2-di-(9Z-octadecenoyl)-sn-glycero-3-phospho]-3'-[1-(9Z-octadecenoyl)-sn-glycero-3-phospho]-glycerol + (9Z)-octadecenoate + H(+). It participates in lipid metabolism; phospholipid metabolism. Its pathway is lipid metabolism; leukotriene B4 biosynthesis. The protein operates within lipid metabolism; leukotriene C4 biosynthesis. Functionally, secretory calcium-dependent phospholipase A2 that primarily targets extracellular phospholipids. Hydrolyzes the ester bond of the fatty acyl group attached at sn-2 position of phospholipids (phospholipase A2 activity), preferentially releasing fatty acyl groups with a low degree of unsaturation such as oleoyl (C18:1) and linoleoyl (C18:2) groups. Hydrolyzes low-density lipoprotein (LDL) phospholipids releasing unsaturated fatty acids that drive macrophage polarization toward an M2 phenotype. May act in an autocrine and paracrine manner. Contributes to lipid remodeling of cellular membranes at different subcellular locations and generation of lipid mediators involved in pathogen clearance. Cleaves sn-2 fatty acyl chains of cardiolipin, a major component of the inner membrane of mitochondria and bacterial membranes. Promotes phagocytosis of bacteria in macrophages through production of lysophosphatidylethanolamines. Displays bactericidal activity against Gram-positive bacteria by directly hydrolyzing the phospholipids of the bacterial membrane. Promotes phagocytosis and killing of ingested fungi likely through controlling phagosome-lysosome fusion and phagosome maturation. Plays a role in biosynthesis of cysteinyl leukotrienes (CysLTs) in myeloid cells. In eosinophils, triggers perinuclear arachidonate release and LTC4 synthesis in a PLA2G4A-independent way. In neutrophils, amplifies CysLTs biosynthesis initiated by PLA2G4A. Promotes immune complex clearance in macrophages via stimulating synthesis of CysLTs, which act through CYSLTR1 to trigger phagocytosis. May regulate antigen processing in antigen-presenting cells. In pulmonary macrophages regulates IL33 production required for activation of group 2 innate lymphoid cells. May play a role in the biosynthesis of N-acyl ethanolamines that regulate energy metabolism. Hydrolyzes N-acyl phosphatidylethanolamines to N-acyl lysophosphatidylethanolamines, which are further cleaved by a lysophospholipase D to release N-acyl ethanolamines. The chain is Phospholipase A2 group V (Pla2g5) from Mus musculus (Mouse).